The chain runs to 187 residues: Major allergen Equ c 1 (187 aa).

Residues 1-15 (MKLLLLCLGLILVCA) constitute a signal peptide (or 16, or 21). N-linked (GlcNAc...) asparagine glycosylation is found at Asn-53 and Asn-68. Cys-83 and Cys-176 are joined by a disulfide.

It belongs to the calycin superfamily. Lipocalin family. As to quaternary structure, homodimer. Several N-terminal ends may be due to cleavage by signal peptidase at different sites or may be generated by proteolytic processing of the secreted protein. Post-translationally, analysis of the sugar composition shows the presence of GalNAc, Gal, NeuAc, GlcNAc, and Man. May be also O-glycosylated. Expressed in liver and in sublingual and submaxillary salivary glands. Highly concentrated in secretory fluid such as saliva and urine as well as in hair dandruff extract.

It localises to the secreted. The protein is Major allergen Equ c 1 of Equus caballus (Horse).